The primary structure comprises 802 residues: Leucine--tRNA ligase (802 aa).

Positions 39–50 match the 'HIGH' region motif; the sequence is PYPSGAGLHVGH. Residues 574-578 carry the 'KMSKS' region motif; it reads KMSKS. Lys-577 is a binding site for ATP.

Belongs to the class-I aminoacyl-tRNA synthetase family.

Its subcellular location is the cytoplasm. It carries out the reaction tRNA(Leu) + L-leucine + ATP = L-leucyl-tRNA(Leu) + AMP + diphosphate. This chain is Leucine--tRNA ligase, found in Macrococcus caseolyticus (strain JCSC5402) (Macrococcoides caseolyticum).